We begin with the raw amino-acid sequence, 459 residues long: MDPTAPLADTIAAIATAVVPEQGSVGIVRLSGSRALPIVQAIFTPARRNAVWESHRLLYGWIRDEKGQILDEALAVWMQAPRSYTREDVAELHCHGGIMVVQATLQQCLRQGARLAQPGEFSLRAFLNGRIDLTQAESVADLVAARSPQAARMALAGLQGKLGGSIRALRQELLGLLAEIEARLDFEEDLPPLDVAAWQARLQAIQTQIQALLATAERGQLLRTGVKVAIVGRPNVGKSSLLNAWSGQDRAIVTDLPGTTRDVVESHLVVKGIPVQLLDTAGIRATEDPVERLGVERSQRLAQAADVLVLVIDAQAGWTAADAAIYESIRHRPLILVINKTDLAPPEGIPLPPEIAHRVPAVAAQGKGIPELEEALEQLVTQGRPQPNLEISLNQRQAAALQQAQASLEQVGQAIQAQLPLDFWSIDLRGALHALGQITGEEISESVLDQIFSRFCIGK.

(6S)-5-formyl-5,6,7,8-tetrahydrofolate is bound by residues arginine 29, glutamate 91, and arginine 130. The TrmE-type G domain occupies glycine 225 to threonine 381. Residue asparagine 235 participates in K(+) binding. GTP contacts are provided by residues asparagine 235 to serine 240, threonine 254 to threonine 260, and aspartate 279 to glycine 282. Serine 239 provides a ligand contact to Mg(2+). Threonine 254, leucine 256, and threonine 259 together coordinate K(+). Residue threonine 260 participates in Mg(2+) binding. Position 459 (lysine 459) interacts with (6S)-5-formyl-5,6,7,8-tetrahydrofolate.

Belongs to the TRAFAC class TrmE-Era-EngA-EngB-Septin-like GTPase superfamily. TrmE GTPase family. In terms of assembly, homodimer. Heterotetramer of two MnmE and two MnmG subunits. K(+) serves as cofactor.

It is found in the cytoplasm. Exhibits a very high intrinsic GTPase hydrolysis rate. Involved in the addition of a carboxymethylaminomethyl (cmnm) group at the wobble position (U34) of certain tRNAs, forming tRNA-cmnm(5)s(2)U34. The sequence is that of tRNA modification GTPase MnmE from Synechococcus sp. (strain JA-2-3B'a(2-13)) (Cyanobacteria bacterium Yellowstone B-Prime).